Here is a 189-residue protein sequence, read N- to C-terminus: Elongation factor P (189 aa).

This sequence belongs to the elongation factor P family.

The protein resides in the cytoplasm. The protein operates within protein biosynthesis; polypeptide chain elongation. Its function is as follows. Involved in peptide bond synthesis. Stimulates efficient translation and peptide-bond synthesis on native or reconstituted 70S ribosomes in vitro. Probably functions indirectly by altering the affinity of the ribosome for aminoacyl-tRNA, thus increasing their reactivity as acceptors for peptidyl transferase. The chain is Elongation factor P from Ehrlichia canis (strain Jake).